Here is a 357-residue protein sequence, read N- to C-terminus: tRNA-specific 2-thiouridylase MnmA (357 aa).

ATP contacts are provided by residues 6–13 (AMSGGVDS) and L32. The active-site Nucleophile is the C101. The cysteines at positions 101 and 193 are disulfide-linked. ATP is bound at residue G125. Residues 143–145 (KDQ) are interaction with tRNA. Residue C193 is the Cysteine persulfide intermediate of the active site.

It belongs to the MnmA/TRMU family.

It is found in the cytoplasm. It catalyses the reaction S-sulfanyl-L-cysteinyl-[protein] + uridine(34) in tRNA + AH2 + ATP = 2-thiouridine(34) in tRNA + L-cysteinyl-[protein] + A + AMP + diphosphate + H(+). Functionally, catalyzes the 2-thiolation of uridine at the wobble position (U34) of tRNA, leading to the formation of s(2)U34. This chain is tRNA-specific 2-thiouridylase MnmA, found in Mycolicibacterium vanbaalenii (strain DSM 7251 / JCM 13017 / BCRC 16820 / KCTC 9966 / NRRL B-24157 / PYR-1) (Mycobacterium vanbaalenii).